Reading from the N-terminus, the 275-residue chain is NH(3)-dependent NAD(+) synthetase (275 aa).

Position 46–53 (46–53) interacts with ATP; sequence GISGGQDS. Position 52 (aspartate 52) interacts with Mg(2+). Arginine 140 lines the deamido-NAD(+) pocket. Threonine 160 is an ATP binding site. A Mg(2+)-binding site is contributed by glutamate 165. 2 residues coordinate deamido-NAD(+): lysine 173 and aspartate 180. 2 residues coordinate ATP: lysine 189 and threonine 211. 260–261 is a binding site for deamido-NAD(+); that stretch reads HK.

Belongs to the NAD synthetase family. In terms of assembly, homodimer.

The catalysed reaction is deamido-NAD(+) + NH4(+) + ATP = AMP + diphosphate + NAD(+) + H(+). The protein operates within cofactor biosynthesis; NAD(+) biosynthesis; NAD(+) from deamido-NAD(+) (ammonia route): step 1/1. Catalyzes the ATP-dependent amidation of deamido-NAD to form NAD. Uses ammonia as a nitrogen source. This Salmonella arizonae (strain ATCC BAA-731 / CDC346-86 / RSK2980) protein is NH(3)-dependent NAD(+) synthetase.